The primary structure comprises 130 residues: MGEILLLAAGGALGAVSRYGLNNLTVKLLGDSFPYGTLIVNCLGCFVLGFLMQWGFSSDSHNTHLKLMLTAGFLGAFTTFSTFSYETLDCFKNGDYFNGFSNILANVLLGLLMVFIGAYLGSLLKQNSGT.

Transmembrane regions (helical) follow at residues 1–21, 36–56, 65–85, and 103–123; these read MGEILLLAAGGALGAVSRYGL, GTLIVNCLGCFVLGFLMQWGF, LKLMLTAGFLGAFTTFSTFSY, and ILANVLLGLLMVFIGAYLGSL. 2 residues coordinate Na(+): glycine 75 and threonine 78.

It belongs to the fluoride channel Fluc/FEX (TC 1.A.43) family.

It is found in the cell membrane. The catalysed reaction is fluoride(in) = fluoride(out). With respect to regulation, na(+) is not transported, but it plays an essential structural role and its presence is essential for fluoride channel function. Functionally, fluoride-specific ion channel. Important for reducing fluoride concentration in the cell, thus reducing its toxicity. In Dehalococcoides mccartyi (strain ATCC BAA-2266 / KCTC 15142 / 195) (Dehalococcoides ethenogenes (strain 195)), this protein is Fluoride-specific ion channel FluC.